Consider the following 1764-residue polypeptide: MPLMVLLLSQRTGGVAQLLSVHGLDTHRRNNLVLLDEDTAASCIAGQLVLLSLSTGARRYLPGRDGGGVGAVAVHPSRTLLAVGEKARPGPASAGPAVYIYSYPGLEVVKVLRGGTERAYSALAFDGERGDTLASVGHFPDFLLTLWDWRQEAIVLRAKAFSQDVYGVAFSPYFEGQLTTSGQGHIRFWRMASTFTGLKLQGAIGKFGNVELSDVAAFVELPDGKVLSSTETGELLLWDGGLIKVVLTRPGSRPCHDGPIEALLLDRPAGRVLSAGADGRVRMWDFGAVNDAEPREDSHSLELSPLDEVVVAEGAALSALLADSGGRRWVVADKAGNVYTVALPPAGPVGKGAVVTRVASHPAGAVAGLQLSARTHTALVASADGCLRALDYVSGAVLAEAATPQRITAFTPLPAASPACPGGAMTAATGYRDGVVRLHARCAEGLALVGVAKAHKGAVAALAVSADGGRLVSAGEDGSVFFFDLTAQPQPGTGVPGMPACGLLAPRAFIKLPSGSGTVTCGVWEAAEGGGVLLGTNRGTILSVPLPPPDLNTHHSYEWAAGTSAVSSYQLVVPKPKRPKKKKGKNDGEEGDKEGGEQDEGQGGEDKGGEQADGEGGSKEGGEEGRAAEEEEEEEADDEADGGAGGPSSTTGELISLTLAPNEPGALLVTAGGVGHAARKAWRVRMGEPLAAPLLEGFASAPVTCLAHAGPEGRLALLGSGDGLVRLQALEEPFGSAAPGALPLWEAPLHDMQSGRVSGLGLSHDGAYLVTAAADGALHLLALALPPELAPPPTTQPGDEPLPGPAALPLRPPDVLAAAAYTLEEEKQQAERDQQVREAEEKKLSVRQRLGLIRAEFEALLAENEAAPEALRLPRADLEVDPGLRALMEAEALRREEVARLELAWESERQRLGLAKLRRYFLDGLESERVVLHSLRGSSTVTTFRVAKLSDETRAELAAMRQAARAAAAASAAAGGEGGAGGRDTDARGKGSDTGGGPGGDAAARARLAEATAALEEGTASGKLNKADLRRLARKRREAEWAAFNGTRPDDTYDSPADLAAIEEARRTIGDFKLKSDPNYVVPEEERLTPQRKRLAMLELEEALHDIAAAFNAKFFALRDVKRKVLADVRVKLAALAELAAAAGAATGGADPDATAAAYLAPFSGLPSGLLPEEEPAEAREAVTDADLAAFAARKAEDERKAAAAAAGGLGGFAGAAAGPKKPAAGGAAPAGGALAGGAAGSGSVAHGAGGPSAGGQQGLTAAEEALAKMMAAVPQSELEKGLAAYNRRRVEHMRSKLSEEITAMLDAFDDAHSALKAEKLGLEADVKAGQMRLLVGLQELQLLREFDKRESVLLAKRQAKLDDKQEIVDKIAECTDKLETKRLELEGLVARRAAVVAELDAVVPESDPFREALVRVFHRRIKRSKKKAGGGGGEDDYDSEEDEEDEDMGDDEVDDDDDGGEEVCPPGCDQSVYERVCDLREKRLDEEDMIAEFTKTIEVLRKEKEALAKKQRLVEQGLAAVNADMAEFQKEKQGRLNQVEVIVALRMHQIEYLLDGCLPDDLSACLVFSASQLRRLQARVDELEEEKAGLRAAHKELRRQHAALLRDKADKEARVAELEARAHDVQMLKFGQVIDLELLDRVSSSRGTEELREDLKKQELAYARELAEWDAKINARMDELVVLTRENTACLNAVSELTAAQRRLESGLTATRKGLFADPVQQRRAEVEERDALVALVNAQAAELDRLKGQLLALRRKDTSMYA.

WD repeat units follow at residues 115–157 (GTER…IVLR), 160–199 (AFSQ…TGLK), 208–248 (GNVE…VVLT), 255–294 (CHDG…DAEP), 361–400 (HPAG…VLAE), 454–493 (AHKG…QPGT), and 495–534 (VPGM…GVLL). The disordered stretch occupies residues 570 to 654 (QLVVPKPKRP…GGPSSTTGEL (85 aa)). The span at 575-584 (KPKRPKKKKG) shows a compositional bias: basic residues. 2 stretches are compositionally biased toward basic and acidic residues: residues 585–596 (KNDGEEGDKEGG) and 604–628 (GEDK…GRAA). Residues 629 to 641 (EEEEEEEADDEAD) are compositionally biased toward acidic residues. WD repeat units follow at residues 649–692 (STTG…PLAA), 707–752 (AHAG…LHDM), and 753–791 (QSGR…ELAP). Residues 821–850 (YTLEEEKQQAERDQQVREAEEKKLSVRQRL) adopt a coiled-coil conformation. 2 disordered regions span residues 972–1003 (AAAG…GDAA) and 1426–1468 (KKKA…CPPG). Over residues 1434 to 1462 (GEDDYDSEEDEEDEDMGDDEVDDDDDGGE) the composition is skewed to acidic residues. Coiled-coil stretches lie at residues 1479 to 1517 (DLRE…LVEQ), 1567 to 1674 (LVFS…DAKI), and 1729 to 1758 (EERD…LRRK).

The protein belongs to the CFAP44 family.

It localises to the cell projection. The protein localises to the cilium. Its subcellular location is the flagellum. It is found in the cytoplasm. The protein resides in the cytoskeleton. It localises to the flagellum axoneme. Its function is as follows. Flagellar protein involved in sperm flagellum axoneme organization and function. The sequence is that of Cilia- and flagella-associated protein 44 from Chlamydomonas reinhardtii (Chlamydomonas smithii).